A 212-amino-acid chain; its full sequence is MNNNNSFNFIDSQYSTPQGAYYDNTGRMGGGGGMGGPTDSFDNELPLLEELGINFDHIRSKTLSVLNPLKKIDSHIMDDTDLGGPILFGLLLGFSLLMSGKIQFGYIYGLGLIGCVSMYIVLNLMSEKGIDIYRVISVLGYCLLPMIFLSFTSLIININGMVGYILIGFAIVWSTYSASKMFVKVLSMIDQRILVAYPVGLLYTGFALITAF.

The Cytoplasmic segment spans residues 1 to 79 (MNNNNSFNFI…KKIDSHIMDD (79 aa)). Residues 80–100 (TDLGGPILFGLLLGFSLLMSG) traverse the membrane as a helical segment. A topological domain (lumenal) is located at residue Lys101. A helical transmembrane segment spans residues 102 to 122 (IQFGYIYGLGLIGCVSMYIVL). Over 123 to 128 (NLMSEK) the chain is Cytoplasmic. A helical membrane pass occupies residues 129-149 (GIDIYRVISVLGYCLLPMIFL). Residues 150–163 (SFTSLIININGMVG) lie on the Lumenal side of the membrane. Residues 164–186 (YILIGFAIVWSTYSASKMFVKVL) form a helical membrane-spanning segment. Residues 187–191 (SMIDQ) are Cytoplasmic-facing. A helical transmembrane segment spans residues 192-212 (RILVAYPVGLLYTGFALITAF).

It belongs to the YIP1 family.

It is found in the endoplasmic reticulum membrane. The protein resides in the golgi apparatus. The protein localises to the cis-Golgi network membrane. Its function is as follows. Plays a role in transport between endoplasmic reticulum and Golgi. In Dictyostelium discoideum (Social amoeba), this protein is Protein YIPF5 homolog (yipf5).